A 299-amino-acid chain; its full sequence is HTH-type transcriptional repressor CarH (299 aa).

One can recognise an HTH merR-type domain in the interval 5-74; the sequence is TYRINIAAEL…ISEAAKLLPQ (70 aa). Positions 8–27 form a DNA-binding region, H-T-H motif; the sequence is INIAAELAGVRVELIRAWER. Positions 180–299 constitute a B12-binding domain; it reads HRHGVLACFP…EEDWDRLAGT (120 aa).

Belongs to the CarA/CarH B12-binding photoregulator family. Forms oligomers. Interacts with CarS.

Requires cobalamin (vitamin B12) for repressor activity. In the dark, binding of cobalamin to CarH induces its oligomerization, which enhances binding to the DNA and repressor activity. Light causes cobalamin photolysis and disruption of the cobalamin-CarH complex, which decreases interaction with DNA and allows transcription of the carB operon. Interaction with CarS also prevents binding to DNA. In terms of biological role, negative regulator of the carB operon in the dark. Binds specifically to the CarA operator, in the region around the carB promoter, which blocks access to the RNA polymerase. The polypeptide is HTH-type transcriptional repressor CarH (carH) (Myxococcus xanthus).